The chain runs to 493 residues: GTPase Der (493 aa).

The EngA-type G 1 domain maps to 3-166 (PVIALVGRPN…EALGIFPKDN (164 aa)). Residues 9–16 (GRPNVGKS), 56–60 (DTGGI), and 118–121 (NKVD) contribute to the GTP site. Residues 166–195 (NAEEEGEGEPASEEVAEGEEPTRIPGPSEK) are disordered. Residues 167–184 (AEEEGEGEPASEEVAEGE) show a composition bias toward acidic residues. Residues 198 to 371 (IKIAIIGRPN…SVQESFRSAV (174 aa)) enclose the EngA-type G 2 domain. GTP-binding positions include 204–211 (GRPNVGKS), 251–255 (DTAGV), and 316–319 (NKWD). Positions 372–456 (TRWPTSRLTS…PIRIEYKGGE (85 aa)) constitute a KH-like domain. Basic and acidic residues predominate over residues 454-463 (GGENPYEGKK). Residues 454-493 (GGENPYEGKKNSLTARQVNKKRRLMSHHKKAEKKKKDKRR) are disordered. Residues 471–493 (VNKKRRLMSHHKKAEKKKKDKRR) show a composition bias toward basic residues.

The protein belongs to the TRAFAC class TrmE-Era-EngA-EngB-Septin-like GTPase superfamily. EngA (Der) GTPase family. In terms of assembly, associates with the 50S ribosomal subunit.

In terms of biological role, GTPase that plays an essential role in the late steps of ribosome biogenesis. The chain is GTPase Der from Pseudomonas aeruginosa (strain ATCC 15692 / DSM 22644 / CIP 104116 / JCM 14847 / LMG 12228 / 1C / PRS 101 / PAO1).